The sequence spans 341 residues: Holliday junction branch migration complex subunit RuvB (341 aa).

The interval 3–184 (DDFDIRDARM…FGINMHLEYY (182 aa)) is large ATPase domain (RuvB-L). Residues leucine 23, arginine 24, glycine 65, lysine 68, threonine 69, threonine 70, 131–133 (EDY), arginine 174, tyrosine 184, and arginine 221 contribute to the ATP site. A Mg(2+)-binding site is contributed by threonine 69. Positions 185-255 (DMETLTKIVL…IACFSLEALN (71 aa)) are small ATPAse domain (RuvB-S). The interval 258–341 (RYGLDQIDNK…RVGEQGFLFD (84 aa)) is head domain (RuvB-H). Residues arginine 313 and arginine 318 each contribute to the DNA site.

The protein belongs to the RuvB family. Homohexamer. Forms an RuvA(8)-RuvB(12)-Holliday junction (HJ) complex. HJ DNA is sandwiched between 2 RuvA tetramers; dsDNA enters through RuvA and exits via RuvB. An RuvB hexamer assembles on each DNA strand where it exits the tetramer. Each RuvB hexamer is contacted by two RuvA subunits (via domain III) on 2 adjacent RuvB subunits; this complex drives branch migration. In the full resolvosome a probable DNA-RuvA(4)-RuvB(12)-RuvC(2) complex forms which resolves the HJ.

It localises to the cytoplasm. The catalysed reaction is ATP + H2O = ADP + phosphate + H(+). In terms of biological role, the RuvA-RuvB-RuvC complex processes Holliday junction (HJ) DNA during genetic recombination and DNA repair, while the RuvA-RuvB complex plays an important role in the rescue of blocked DNA replication forks via replication fork reversal (RFR). RuvA specifically binds to HJ cruciform DNA, conferring on it an open structure. The RuvB hexamer acts as an ATP-dependent pump, pulling dsDNA into and through the RuvAB complex. RuvB forms 2 homohexamers on either side of HJ DNA bound by 1 or 2 RuvA tetramers; 4 subunits per hexamer contact DNA at a time. Coordinated motions by a converter formed by DNA-disengaged RuvB subunits stimulates ATP hydrolysis and nucleotide exchange. Immobilization of the converter enables RuvB to convert the ATP-contained energy into a lever motion, pulling 2 nucleotides of DNA out of the RuvA tetramer per ATP hydrolyzed, thus driving DNA branch migration. The RuvB motors rotate together with the DNA substrate, which together with the progressing nucleotide cycle form the mechanistic basis for DNA recombination by continuous HJ branch migration. Branch migration allows RuvC to scan DNA until it finds its consensus sequence, where it cleaves and resolves cruciform DNA. In Parabacteroides distasonis (strain ATCC 8503 / DSM 20701 / CIP 104284 / JCM 5825 / NCTC 11152), this protein is Holliday junction branch migration complex subunit RuvB.